Here is a 235-residue protein sequence, read N- to C-terminus: Dephospho-CoA kinase (235 aa).

One can recognise a DPCK domain in the interval 15 to 219 (NVGLTGSISC…KKERLQRKSA (205 aa)). Position 23–28 (23–28 (SCGKST)) interacts with ATP.

This sequence belongs to the CoaE family.

It localises to the cytoplasm. It catalyses the reaction 3'-dephospho-CoA + ATP = ADP + CoA + H(+). It participates in cofactor biosynthesis; coenzyme A biosynthesis; CoA from (R)-pantothenate: step 5/5. Functionally, catalyzes the phosphorylation of the 3'-hydroxyl group of dephosphocoenzyme A to form coenzyme A. This Syntrophus aciditrophicus (strain SB) protein is Dephospho-CoA kinase.